We begin with the raw amino-acid sequence, 243 residues long: Probable transcriptional regulatory protein BAV2207 (243 aa).

The disordered stretch occupies residues 1–21; it reads MAGHSKWANIQHRKGRQDAKR.

It belongs to the TACO1 family.

The protein resides in the cytoplasm. This Bordetella avium (strain 197N) protein is Probable transcriptional regulatory protein BAV2207.